The primary structure comprises 215 residues: Sec-independent protein translocase protein TatB (215 aa).

Residues 1–21 form a helical membrane-spanning segment; the sequence is MLDIGWTELVVIAIVLIIVVG. Disordered regions lie at residues 95–119 and 138–215; these read DLQKATTPDRPPASATPEPLVEPVN and AVSS…KGDA. The segment covering 145-157 has biased composition (basic and acidic residues); it reads QMDRAADVPKASE. Residues 203 to 215 show a composition bias toward basic residues; that stretch reads SKTRAASRKKGDA.

It belongs to the TatB family. The Tat system comprises two distinct complexes: a TatABC complex, containing multiple copies of TatA, TatB and TatC subunits, and a separate TatA complex, containing only TatA subunits. Substrates initially bind to the TatABC complex, which probably triggers association of the separate TatA complex to form the active translocon.

It localises to the cell inner membrane. Its function is as follows. Part of the twin-arginine translocation (Tat) system that transports large folded proteins containing a characteristic twin-arginine motif in their signal peptide across membranes. Together with TatC, TatB is part of a receptor directly interacting with Tat signal peptides. TatB may form an oligomeric binding site that transiently accommodates folded Tat precursor proteins before their translocation. The polypeptide is Sec-independent protein translocase protein TatB (Rhizobium meliloti (strain 1021) (Ensifer meliloti)).